The primary structure comprises 282 residues: NADPH-dependent 7-cyano-7-deazaguanine reductase (282 aa).

Residue 88–90 coordinates substrate; it reads IES. NADPH is bound at residue 90–91; the sequence is SK. Cys-190 (thioimide intermediate) is an active-site residue. Asp-197 functions as the Proton donor in the catalytic mechanism. 229-230 provides a ligand contact to substrate; sequence HE. 258-259 provides a ligand contact to NADPH; it reads RG.

This sequence belongs to the GTP cyclohydrolase I family. QueF type 2 subfamily. Homodimer.

Its subcellular location is the cytoplasm. The catalysed reaction is 7-aminomethyl-7-carbaguanine + 2 NADP(+) = 7-cyano-7-deazaguanine + 2 NADPH + 3 H(+). Its pathway is tRNA modification; tRNA-queuosine biosynthesis. Its function is as follows. Catalyzes the NADPH-dependent reduction of 7-cyano-7-deazaguanine (preQ0) to 7-aminomethyl-7-deazaguanine (preQ1). The chain is NADPH-dependent 7-cyano-7-deazaguanine reductase from Salmonella paratyphi A (strain ATCC 9150 / SARB42).